Here is a 270-residue protein sequence, read N- to C-terminus: Urease accessory protein UreD (270 aa).

The protein belongs to the UreD family. In terms of assembly, ureD, UreF and UreG form a complex that acts as a GTP-hydrolysis-dependent molecular chaperone, activating the urease apoprotein by helping to assemble the nickel containing metallocenter of UreC. The UreE protein probably delivers the nickel.

It localises to the cytoplasm. Required for maturation of urease via the functional incorporation of the urease nickel metallocenter. This Klebsiella pneumoniae protein is Urease accessory protein UreD.